Here is a 286-residue protein sequence, read N- to C-terminus: Formamidopyrimidine-DNA glycosylase (286 aa).

P2 functions as the Schiff-base intermediate with DNA in the catalytic mechanism. Residue E3 is the Proton donor of the active site. K60 acts as the Proton donor; for beta-elimination activity in catalysis. DNA is bound by residues H103, R122, and R167. Residues 252 to 286 form an FPG-type zinc finger; that stretch reads WVYRRNQKPCRKCGTLIEKTKVAGRSTHWCPNCQN. Catalysis depends on R276, which acts as the Proton donor; for delta-elimination activity.

This sequence belongs to the FPG family. In terms of assembly, monomer. Zn(2+) is required as a cofactor.

The enzyme catalyses Hydrolysis of DNA containing ring-opened 7-methylguanine residues, releasing 2,6-diamino-4-hydroxy-5-(N-methyl)formamidopyrimidine.. The catalysed reaction is 2'-deoxyribonucleotide-(2'-deoxyribose 5'-phosphate)-2'-deoxyribonucleotide-DNA = a 3'-end 2'-deoxyribonucleotide-(2,3-dehydro-2,3-deoxyribose 5'-phosphate)-DNA + a 5'-end 5'-phospho-2'-deoxyribonucleoside-DNA + H(+). Functionally, involved in base excision repair of DNA damaged by oxidation or by mutagenic agents. Acts as a DNA glycosylase that recognizes and removes damaged bases. Has a preference for oxidized purines, such as 7,8-dihydro-8-oxoguanine (8-oxoG). Has AP (apurinic/apyrimidinic) lyase activity and introduces nicks in the DNA strand. Cleaves the DNA backbone by beta-delta elimination to generate a single-strand break at the site of the removed base with both 3'- and 5'-phosphates. In Prochlorococcus marinus (strain MIT 9211), this protein is Formamidopyrimidine-DNA glycosylase.